Reading from the N-terminus, the 126-residue chain is Large ribosomal subunit protein bL17 (126 aa).

Belongs to the bacterial ribosomal protein bL17 family. Part of the 50S ribosomal subunit. Contacts protein L32.

This Rickettsia felis (strain ATCC VR-1525 / URRWXCal2) (Rickettsia azadi) protein is Large ribosomal subunit protein bL17.